The following is a 147-amino-acid chain: uncharacterized protein (147 aa).

Transmembrane regions (helical) follow at residues 21–41 (LMLW…IVFV) and 67–87 (ALFG…SIPL).

The protein resides in the cell membrane. This is an uncharacterized protein from Ureaplasma parvum serovar 3 (strain ATCC 700970).